Here is a 444-residue protein sequence, read N- to C-terminus: Trigger factor (444 aa).

Residues 166–251 (GDQVVIDFKG…VKAVKAPKAA (86 aa)) form the PPIase FKBP-type domain.

This sequence belongs to the FKBP-type PPIase family. Tig subfamily.

Its subcellular location is the cytoplasm. The enzyme catalyses [protein]-peptidylproline (omega=180) = [protein]-peptidylproline (omega=0). Its function is as follows. Involved in protein export. Acts as a chaperone by maintaining the newly synthesized protein in an open conformation. Functions as a peptidyl-prolyl cis-trans isomerase. The protein is Trigger factor of Cereibacter sphaeroides (strain KD131 / KCTC 12085) (Rhodobacter sphaeroides).